Here is a 464-residue protein sequence, read N- to C-terminus: Light-independent protochlorophyllide reductase subunit N (464 aa).

[4Fe-4S] cluster is bound by residues cysteine 29, cysteine 54, and cysteine 114.

Belongs to the BchN/ChlN family. As to quaternary structure, protochlorophyllide reductase is composed of three subunits; ChlL, ChlN and ChlB. Forms a heterotetramer of two ChlB and two ChlN subunits. The cofactor is [4Fe-4S] cluster.

It is found in the plastid. The protein resides in the chloroplast. The catalysed reaction is chlorophyllide a + oxidized 2[4Fe-4S]-[ferredoxin] + 2 ADP + 2 phosphate = protochlorophyllide a + reduced 2[4Fe-4S]-[ferredoxin] + 2 ATP + 2 H2O. Its pathway is porphyrin-containing compound metabolism; chlorophyll biosynthesis (light-independent). Functionally, component of the dark-operative protochlorophyllide reductase (DPOR) that uses Mg-ATP and reduced ferredoxin to reduce ring D of protochlorophyllide (Pchlide) to form chlorophyllide a (Chlide). This reaction is light-independent. The NB-protein (ChlN-ChlB) is the catalytic component of the complex. The sequence is that of Light-independent protochlorophyllide reductase subunit N from Stigeoclonium helveticum (Green alga).